The primary structure comprises 376 residues: Queuine tRNA-ribosyltransferase (376 aa).

Asp90 acts as the Proton acceptor in catalysis. Residues 90-94 (DSGGF), Asp144, Gln193, and Gly220 contribute to the substrate site. An RNA binding region spans residues 251-257 (GVGTPED). Asp270 functions as the Nucleophile in the catalytic mechanism. Residues 275–279 (TRNAR) form an RNA binding; important for wobble base 34 recognition region. Residues Cys308, Cys310, Cys313, and His339 each coordinate Zn(2+).

The protein belongs to the queuine tRNA-ribosyltransferase family. Homodimer. Within each dimer, one monomer is responsible for RNA recognition and catalysis, while the other monomer binds to the replacement base PreQ1. Zn(2+) serves as cofactor.

The enzyme catalyses 7-aminomethyl-7-carbaguanine + guanosine(34) in tRNA = 7-aminomethyl-7-carbaguanosine(34) in tRNA + guanine. It participates in tRNA modification; tRNA-queuosine biosynthesis. Its function is as follows. Catalyzes the base-exchange of a guanine (G) residue with the queuine precursor 7-aminomethyl-7-deazaguanine (PreQ1) at position 34 (anticodon wobble position) in tRNAs with GU(N) anticodons (tRNA-Asp, -Asn, -His and -Tyr). Catalysis occurs through a double-displacement mechanism. The nucleophile active site attacks the C1' of nucleotide 34 to detach the guanine base from the RNA, forming a covalent enzyme-RNA intermediate. The proton acceptor active site deprotonates the incoming PreQ1, allowing a nucleophilic attack on the C1' of the ribose to form the product. After dissociation, two additional enzymatic reactions on the tRNA convert PreQ1 to queuine (Q), resulting in the hypermodified nucleoside queuosine (7-(((4,5-cis-dihydroxy-2-cyclopenten-1-yl)amino)methyl)-7-deazaguanosine). The sequence is that of Queuine tRNA-ribosyltransferase from Campylobacter concisus (strain 13826).